A 463-amino-acid chain; its full sequence is Chaperone SurA (463 aa).

Residues 1–25 (MTRYFSIVLSLLLAVSCVFLPVASA) form the signal peptide. 2 consecutive PpiC domains span residues 175–277 (GAQY…KLVE) and 291–390 (ATEY…QRLG). The interval 439 to 463 (ADDHHTPSAAVTPATGAVLPAATKH) is disordered.

Its subcellular location is the periplasm. The catalysed reaction is [protein]-peptidylproline (omega=180) = [protein]-peptidylproline (omega=0). In terms of biological role, chaperone involved in the correct folding and assembly of outer membrane proteins. Recognizes specific patterns of aromatic residues and the orientation of their side chains, which are found more frequently in integral outer membrane proteins. May act in both early periplasmic and late outer membrane-associated steps of protein maturation. This chain is Chaperone SurA, found in Xylella fastidiosa (strain Temecula1 / ATCC 700964).